Here is a 614-residue protein sequence, read N- to C-terminus: Zinc metalloproteinase dpy-31 (614 aa).

The first 24 residues, 1-24 (MSLLRCTTLLLVVVAIALPPCILG), serve as a signal peptide directing secretion. Residues 25–150 (YSLHDGSRLD…KTGQRRVKRK (126 aa)) constitute a propeptide that is removed on maturation. Residues 150–349 (KFIGSDLRRW…IRLMNKIYCS (200 aa)) enclose the Peptidase M12A domain. Residue Asn190 is glycosylated (N-linked (GlcNAc...) asparagine). Cystine bridges form between Cys193–Cys348, Cys216–Cys237, Cys352–Cys372, Cys374–Cys383, and Cys394–Cys422. A Zn(2+)-binding site is contributed by His245. The active site involves Glu246. Zn(2+) contacts are provided by His249 and His255. The 41-residue stretch at 344 to 384 (NKIYCSNVCSRKLPCQRGGYTDPRRCDRCRCPDGFTGQFCE) folds into the EGF-like domain. In terms of domain architecture, CUB spans 394–510 (CGGRIQVNGG…RGFEARARAL (117 aa)). Asn461 carries an N-linked (GlcNAc...) asparagine glycan. Positions 513-562 (NGQWASWSPWTPCTASCGACGSRMRTRVCSHGACAGEPVENQVCNTHPCN) constitute a TSP type-1 domain. 3 disulfide bridges follow: Cys525-Cys556, Cys529-Cys561, and Cys541-Cys546.

It depends on Zn(2+) as a cofactor.

The protein resides in the secreted. Its activity is regulated as follows. Inhibited by marimastat and tripeptide hydroxamic acids. Inhibited by 1,10-phenanthroline. Metalloprotease which cleaves the carboxyl terminus of procollagens to mature collagens. Probably involved in cuticular collagen maturation. The chain is Zinc metalloproteinase dpy-31 from Teladorsagia circumcincta (Brown stomach worm).